The sequence spans 305 residues: Large ribosomal subunit protein uL3c (305 aa).

The N-terminal 84 residues, 1 to 84, are a transit peptide targeting the chloroplast; it reads MAAILPTFSI…AVGGLEIKMM (84 aa). A disordered region spans residues 228–256; that stretch reads SHRALGSIGAGTTPGHVYKGKKMPGRMGG.

As to quaternary structure, component of the chloroplast large ribosomal subunit (LSU). Mature 70S chloroplast ribosomes of higher plants consist of a small (30S) and a large (50S) subunit. The 30S small subunit contains 1 molecule of ribosomal RNA (16S rRNA) and 24 different proteins. The 50S large subunit contains 3 rRNA molecules (23S, 5S and 4.5S rRNA) and 33 different proteins.

The protein localises to the plastid. It is found in the chloroplast. Component of the chloroplast ribosome (chloro-ribosome), a dedicated translation machinery responsible for the synthesis of chloroplast genome-encoded proteins, including proteins of the transcription and translation machinery and components of the photosynthetic apparatus. The polypeptide is Large ribosomal subunit protein uL3c (RPL3) (Spinacia oleracea (Spinach)).